The chain runs to 415 residues: Alpha-2Db adrenergic receptor (415 aa).

The Extracellular portion of the chain corresponds to 1–33 (MDLSTITFLLPNSSEDTNGTSAPRLPPHSQCAS). N-linked (GlcNAc...) asparagine glycosylation is found at N12 and N18. A helical membrane pass occupies residues 34–58 (VLIVLVVTVIILVTIVGNVLVVVAV). Topologically, residues 59–70 (FTSRALRAPQNL) are cytoplasmic. Residues 71–96 (FLVSLAAADILVATLVIPFSLANEVM) traverse the membrane as a helical segment. Residues 97-106 (GYWYLGSTWC) are Extracellular-facing. A disulfide bridge connects residues C106 and C179. A helical membrane pass occupies residues 107-129 (AFYLALDVLFCTSSIVHLCAISL). Residues 130–150 (DRYWSVTKAVSYNLKRTPRRI) lie on the Cytoplasmic side of the membrane. The helical transmembrane segment at 151–173 (KIMITVVWVISAVISFPPLLMTK) threads the bilayer. Topologically, residues 174-184 (HDELECLLNNE) are extracellular. N183 carries an N-linked (GlcNAc...) asparagine glycan. A helical membrane pass occupies residues 185–208 (TWYILSSCIVSFFAPGLIMILVYC). Over 209–339 (RIYRVAKQRA…QMREKRFTFV (131 aa)) the chain is Cytoplasmic. The segment at 234-299 (QSETCFVRKG…EGAQSCPKPN (66 aa)) is disordered. The span at 276-286 (NRHRNSRFAKS) shows a compositional bias: basic residues. The chain crosses the membrane as a helical span at residues 340–363 (LAVVMGVFVLCWFPFFFTYSLHAI). Topologically, residues 364–376 (CRKSCTIPDSLFN) are extracellular. A helical membrane pass occupies residues 377-397 (LFFWIGYCNSSVNPIIYTIFN). The Cytoplasmic portion of the chain corresponds to 398 to 415 (RDFRKAFKKIMCRHSTRT).

This sequence belongs to the G-protein coupled receptor 1 family. Adrenergic receptor subfamily. ADRA2D sub-subfamily.

It localises to the cell membrane. Its function is as follows. Alpha-2 adrenergic receptors mediate the catecholamine-induced inhibition of adenylate cyclase through the action of G proteins. The order of potency for this receptor is dexmedetomidine &gt; norepinephrine = epinephrine &gt; oxymetazoline. The chain is Alpha-2Db adrenergic receptor (adra2db) from Danio rerio (Zebrafish).